We begin with the raw amino-acid sequence, 370 residues long: Leucine-rich repeat and transmembrane domain-containing protein 2 (370 aa).

The signal sequence occupies residues 1 to 35; sequence MLAPGSSPGQRGRLALQWRQVSWITCWIALYAVEA. Residues 36–68 enclose the LRRNT domain; sequence LPTCPFSCKCDSRSLEVDCSGLGLTTVPPDVPA. The Extracellular segment spans residues 36–310; that stretch reads LPTCPFSCKC…PASVRRAMGT (275 aa). LRR repeat units follow at residues 69–90, 93–114, 117–139, 141–162, and 165–186; these read ATRT…AFAN, SLQR…IFGD, NLTE…LRHS, LLRH…LFDG, and ALRS…TFEP. Asparagine 90 carries an N-linked (GlcNAc...) asparagine glycan. 2 N-linked (GlcNAc...) asparagine glycosylation sites follow: asparagine 117 and asparagine 125. The LRRCT domain maps to 198-252; sequence NPWECDCNLREFKHWMEWFSYRGGRLDQLACTLPKELRGKDMRMVPMEMFNYCSQ. A glycan (N-linked (GlcNAc...) asparagine) is linked at asparagine 257. The tract at residues 261 to 300 is disordered; that stretch reads GLDIPGPPCTKASPEPAKPKPGAEPEPEPSTACPQKQRHR. A helical transmembrane segment spans residues 311–331; the sequence is VIIAGVVCGVVCIMMVVAAAY. Residues 332 to 370 are Cytoplasmic-facing; the sequence is GCIYASLMAKYHRELKKRQPLMGDPEGEHEDQKQISSVA. Residues 351-370 form a disordered region; it reads PLMGDPEGEHEDQKQISSVA.

It is found in the membrane. The chain is Leucine-rich repeat and transmembrane domain-containing protein 2 (LRTM2) from Homo sapiens (Human).